Reading from the N-terminus, the 218-residue chain is Structural protein V19 (218 aa).

The protein localises to the virion. This chain is Structural protein V19, found in Sputnik virophage.